A 343-amino-acid chain; its full sequence is Isopentenyl-diphosphate delta-isomerase (343 aa).

9-10 (RK) contributes to the substrate binding site. FMN contacts are provided by residues serine 66, 67–69 (SMT), serine 98, and asparagine 126. 98-100 (SQR) provides a ligand contact to substrate. Glutamine 161 contacts substrate. A Mg(2+)-binding site is contributed by glutamate 162. FMN-binding positions include lysine 193, threonine 223, 273 to 275 (GIR), and 294 to 295 (AA).

This sequence belongs to the IPP isomerase type 2 family. As to quaternary structure, homooctamer. Dimer of tetramers. It depends on FMN as a cofactor. NADPH serves as cofactor. Mg(2+) is required as a cofactor.

The protein localises to the cytoplasm. It catalyses the reaction isopentenyl diphosphate = dimethylallyl diphosphate. Its function is as follows. Involved in the biosynthesis of isoprenoids. Catalyzes the 1,3-allylic rearrangement of the homoallylic substrate isopentenyl (IPP) to its allylic isomer, dimethylallyl diphosphate (DMAPP). This is Isopentenyl-diphosphate delta-isomerase from Hydrogenovibrio crunogenus (strain DSM 25203 / XCL-2) (Thiomicrospira crunogena).